A 605-amino-acid chain; its full sequence is Solute carrier family 23 member 1 (605 aa).

The segment at 1-30 (MKTPEDPGSPKQHEVVDSAGTSTRDRQAPL) is disordered. Residues 1–59 (MKTPEDPGSPKQHEVVDSAGTSTRDRQAPLPTEPKFDMLYKIEDVPPWYLCILLGFQHY) lie on the Cytoplasmic side of the membrane. The chain crosses the membrane as a helical span at residues 60–80 (LTCFSGTIAVPFLLAEALCVG). The Extracellular portion of the chain corresponds to 81–88 (RDQHMVSQ). The chain crosses the membrane as a helical span at residues 89–109 (LIGTIFTCVGITTLIQTTVGI). Residue Arg110 is a topological domain, cytoplasmic. The helical transmembrane segment at 111 to 131 (LPLFQASAFAFLVPAKSILAL) threads the bilayer. The Extracellular portion of the chain corresponds to 132-166 (ERWKCPSEEEIYGNWSMPLNTSHIWHPRIREVQGA). Residues Asn145 and Asn151 are each glycosylated (N-linked (GlcNAc...) asparagine). Residues 167–187 (IMVSSMVEVVIGLMGLPGALL) form a helical membrane-spanning segment. Topologically, residues 188–214 (SYIGPLTVTPTVSLIGLSVFQAAGDRA) are cytoplasmic. A helical transmembrane segment spans residues 215–232 (GSHWGISACSILLIVLFS). At 233–236 (QYLR) the chain is on the extracellular side. The helical intramembrane region spans 237–250 (NLTFLLPVYRWGKG). Topologically, residues 251-257 (LTLFRVQ) are extracellular. Residues 258-278 (IFKMFPIVLAIMTVWLLCYVL) form a helical membrane-spanning segment. Residues 279-319 (TLTDVLPADPTVYGFQARTDARGDIMAISPWIRIPYPCQWG) are Cytoplasmic-facing. A helical transmembrane segment spans residues 320 to 340 (LPTVTVAAVLGMFSATLAGII). Topologically, residues 341–365 (ESIGDYYACARLAGAPPPPVHAINR) are extracellular. The chain crosses the membrane as a helical span at residues 366–386 (GIFTEGICCIIAGLLGTGNGS). Over 387 to 409 (TSSSPNIGVLGITKVGSRRVVQY) the chain is Cytoplasmic. Residues 410-430 (GAGIMLILGAIGKFTALFASL) traverse the membrane as a helical segment. Residues 431–433 (PDP) lie on the Extracellular side of the membrane. Residues 434 to 454 (ILGGMFCTLFGMITAVGLSNL) traverse the membrane as a helical segment. At 455-464 (QFVDMNSSRN) the chain is on the cytoplasmic side. A helical membrane pass occupies residues 465 to 485 (LFVLGFSMFFGLTLPNYLDSN). The Extracellular segment spans residues 486-497 (PGAINTGIPEVD). The chain crosses the membrane as a helical span at residues 498–518 (QILTVLLTTEMFVGGCLAFIL). Topologically, residues 519 to 605 (DNTVPGSPEE…IETGSVCTKV (87 aa)) are cytoplasmic. Phosphothreonine is present on Thr598. At Ser600 the chain carries Phosphoserine. A Phosphothreonine modification is found at Thr603.

The protein belongs to the nucleobase:cation symporter-2 (NCS2) (TC 2.A.40) family. In terms of processing, phosphorylated. In terms of tissue distribution, expressed in kidney (at protein level).

The protein resides in the cell membrane. It catalyses the reaction L-ascorbate(out) + 2 Na(+)(out) = L-ascorbate(in) + 2 Na(+)(in). The catalysed reaction is urate(out) + 2 Na(+)(out) = urate(in) + 2 Na(+)(in). Functionally, sodium:L-ascorbate cotransporter. Mediates electrogenic uptake of vitamin C, with a stoichiometry of 2 Na(+) for each L-ascorbate. Has retained some ancestral activity toward nucleobases such as urate, an oxidized purine. Low-affinity high-capacity sodium:urate cotransporter, may regulate serum urate levels by serving as a renal urate re-absorber. The polypeptide is Solute carrier family 23 member 1 (Slc23a1) (Mus musculus (Mouse)).